The primary structure comprises 495 residues: NAD(+)--protein-arginine ADP-ribosyltransferase Tre1 (495 aa).

The disordered stretch occupies residues 278–309 (PDLQIKGPTPVKKPEPLQPARQPEKASAPKPV). Residues 315 to 495 (MSLREAVGNQ…VTQFILKEIP (181 aa)) enclose the TR mART core domain. Residues 344 to 495 (RSALLTDDQI…VTQFILKEIP (152 aa)) are ART domain. Active-site residues include Arg406, Ser431, and Glu466.

Belongs to the Arg-specific ADP-ribosyltransferase family.

The protein localises to the secreted. The protein resides in the host cytoplasm. It catalyses the reaction L-arginyl-[protein] + NAD(+) = N(omega)-(ADP-D-ribosyl)-L-arginyl-[protein] + nicotinamide + H(+). Toxic component of a contact-dependent interbacterial competition system (also called effector-immunity systems). Acts by ADP-ribosylating a number of target proteins in target cells; E.coli target proteins include FtsZ, EFTu, RNase E, Fis, YegQ, GuaB and IF2. The sequence is that of NAD(+)--protein-arginine ADP-ribosyltransferase Tre1 from Pseudomonas putida (strain GB-1).